Consider the following 197-residue polypeptide: Transcription factor FapR (197 aa).

It belongs to the FapR family.

Its function is as follows. Transcriptional factor involved in regulation of membrane lipid biosynthesis by repressing genes involved in fatty acid and phospholipid metabolism. The polypeptide is Transcription factor FapR (Bacillus mycoides (strain KBAB4) (Bacillus weihenstephanensis)).